A 169-amino-acid chain; its full sequence is Lipoprotein signal peptidase (169 aa).

4 helical membrane-spanning segments follow: residues 4–24 (PICS…ILDI), 29–49 (WVMA…FNLT), 70–90 (WFFA…MYRS), and 101–121 (YALI…HGAV). Active-site residues include D123 and D141. The chain crosses the membrane as a helical span at residues 137–157 (FNLADVAICIGAALVIFEGFL).

The protein belongs to the peptidase A8 family.

It localises to the cell inner membrane. It catalyses the reaction Release of signal peptides from bacterial membrane prolipoproteins. Hydrolyzes -Xaa-Yaa-Zaa-|-(S,diacylglyceryl)Cys-, in which Xaa is hydrophobic (preferably Leu), and Yaa (Ala or Ser) and Zaa (Gly or Ala) have small, neutral side chains.. It participates in protein modification; lipoprotein biosynthesis (signal peptide cleavage). Functionally, this protein specifically catalyzes the removal of signal peptides from prolipoproteins. The polypeptide is Lipoprotein signal peptidase (Yersinia pestis bv. Antiqua (strain Antiqua)).